The following is a 360-amino-acid chain: Photosystem II protein D1 2 (360 aa).

Transmembrane regions (helical) follow at residues 29-46, 118-133, and 142-156; these read YIGW…AATT, HFLT…EWEL, and WICL…AATA. H118 is a chlorophyll a binding site. Y126 contacts pheophytin a. [CaMn4O5] cluster contacts are provided by D170 and E189. The chain crosses the membrane as a helical span at residues 197 to 218; it reads FHMLGVAGVFGGSLFSAMHGSL. H198 contacts chlorophyll a. A quinone-binding positions include H215 and 264–265; that span reads SF. Fe cation is bound at residue H215. H272 is a Fe cation binding site. The helical transmembrane segment at 274 to 288 threads the bilayer; that stretch reads FLAAWPVIGIWFTAL. [CaMn4O5] cluster-binding residues include H332, E333, D342, and A344. The propeptide occupies 345–360; it reads AGEVAPVALTAPAING.

Belongs to the reaction center PufL/M/PsbA/D family. PSII is composed of 1 copy each of membrane proteins PsbA, PsbB, PsbC, PsbD, PsbE, PsbF, PsbH, PsbI, PsbJ, PsbK, PsbL, PsbM, PsbT, PsbX, PsbY, PsbZ, Psb30/Ycf12, peripheral proteins PsbO, CyanoQ (PsbQ), PsbU, PsbV and a large number of cofactors. It forms dimeric complexes. Requires The D1/D2 heterodimer binds P680, chlorophylls that are the primary electron donor of PSII, and subsequent electron acceptors. It shares a non-heme iron and each subunit binds pheophytin, quinone, additional chlorophylls, carotenoids and lipids. D1 provides most of the ligands for the Mn4-Ca-O5 cluster of the oxygen-evolving complex (OEC). There is also a Cl(-1) ion associated with D1 and D2, which is required for oxygen evolution. The PSII complex binds additional chlorophylls, carotenoids and specific lipids. as cofactor. Post-translationally, tyr-161 forms a radical intermediate that is referred to as redox-active TyrZ, YZ or Y-Z. C-terminally processed by CtpA; processing is essential to allow assembly of the oxygen-evolving complex and thus photosynthetic growth.

The protein resides in the cellular thylakoid membrane. It carries out the reaction 2 a plastoquinone + 4 hnu + 2 H2O = 2 a plastoquinol + O2. Its function is as follows. Photosystem II (PSII) is a light-driven water:plastoquinone oxidoreductase that uses light energy to abstract electrons from H(2)O, generating O(2) and a proton gradient subsequently used for ATP formation. It consists of a core antenna complex that captures photons, and an electron transfer chain that converts photonic excitation into a charge separation. The D1/D2 (PsbA/PsbD) reaction center heterodimer binds P680, the primary electron donor of PSII as well as several subsequent electron acceptors. The protein is Photosystem II protein D1 2 of Trichormus variabilis (strain ATCC 29413 / PCC 7937) (Anabaena variabilis).